Consider the following 378-residue polypeptide: Cytochrome b (378 aa).

Transmembrane regions (helical) follow at residues 33-53, 77-98, 113-133, and 178-198; these read FGSL…FLAM, WMIR…FLHT, WNIG…GYVL, and FFTF…IHLL. Heme b contacts are provided by His-83 and His-97. Residues His-182 and His-196 each coordinate heme b. His-201 is an a ubiquinone binding site. The next 4 membrane-spanning stretches (helical) occupy residues 226 to 246, 288 to 308, 320 to 340, and 347 to 366; these read TKDI…TLFT, LGGV…PATH, ITQI…WIGG, and FEAI…TLIP.

This sequence belongs to the cytochrome b family. In terms of assembly, the cytochrome bc1 complex contains 11 subunits: 3 respiratory subunits (MT-CYB, CYC1 and UQCRFS1), 2 core proteins (UQCRC1 and UQCRC2) and 6 low-molecular weight proteins (UQCRH/QCR6, UQCRB/QCR7, UQCRQ/QCR8, UQCR10/QCR9, UQCR11/QCR10 and a cleavage product of UQCRFS1). This cytochrome bc1 complex then forms a dimer. Requires heme b as cofactor.

It is found in the mitochondrion inner membrane. Its function is as follows. Component of the ubiquinol-cytochrome c reductase complex (complex III or cytochrome b-c1 complex) that is part of the mitochondrial respiratory chain. The b-c1 complex mediates electron transfer from ubiquinol to cytochrome c. Contributes to the generation of a proton gradient across the mitochondrial membrane that is then used for ATP synthesis. This is Cytochrome b (MT-CYB) from Cebus albifrons (White-fronted capuchin).